A 544-amino-acid polypeptide reads, in one-letter code: Putative glycerol-3-phosphate transporter 4 (544 aa).

6 helical membrane passes run 28 to 47, 121 to 141, 156 to 176, 181 to 201, 218 to 238, and 240 to 260; these read TFRY…YHAS, VAFL…GDSL, FFVG…WFFL, AAGL…GNWF, SVGN…GWGW, and FIAP…FLAA. A disordered region spans residues 281-313; the sequence is KRDVEEEEEEVEEDLGTDVEGDGEGSSGSGSGY. Over residues 285–303 the composition is skewed to acidic residues; the sequence is EEEEEEVEEDLGTDVEGDG. 7 helical membrane passes run 319–339, 342–362, 371–391, 402–422, 428–448, 471–491, and 494–514; these read VGLL…CLFF, LVAY…TIGG, GNLS…CGYI, AAAF…YGGV, ILLM…ITTA, AIID…TGFL, and LGWQ…GLLL.

Belongs to the major facilitator superfamily. Organophosphate:Pi antiporter (OPA) (TC 2.A.1.4) family.

It is found in the membrane. This is Putative glycerol-3-phosphate transporter 4 from Arabidopsis thaliana (Mouse-ear cress).